Consider the following 924-residue polypeptide: MMELRVICIIRLVVACVLCLCIFIRSASSATEGFESIACCADSNYTDPKTNLNYTTDYRWYSDKSNCRQIPEILLSHRSNINFRLFDIDEGKRCYNLPTIKDQVYLIRGTFPFDSVNTSFYVSIGATELGEVTSSRLEDLEIEGVFRAPKDNIDFCLLKEDVNPFISQLELRPLPEEYLHDFSTNVLKLISRNNLCGIEDDIRFPVDQNDRIWKATSTPSYALPLSFNVSNVELNGKVTPPLQVLQTALTHPERLEFVHVGLETDDYEYSVLLYFLELNDTLKAGQRVFDIYLNSEIKKEGFDVLEGGSKYSYTVLNISANGSLNITLVKASGSKFGPLLNAYEILQARPWIDETDQTDLEVIQKMRKELLLQNQDNEALESWSGDPCMLFPWKGVACDGSNGSSVITKLDLSSSNLKGTIPSSVTEMTKLQILNLSHNHFDGYIPSFPPSSLLISVDLSYNDLTGQLPESIISLPHLNSLYFGCNQHMRDDDEAKLNSSLINTDYGRCNAKKPKFGQVFMIGAITSGSILITLAVVILFFCRYRHKSITLEGFGGKTYPMATNIIFSLPSKDDFFIKSVSVKPFTLEYIELATEKYKTLIGEGGFGSVYRGTLDDGQEVAVKVRSATSTQGTREFDNELNLLSAIQHENLVPLLGYCNEYDQQILVYPFMSNGSLLDRLYGEPAKRKILDWPTRLSIALGAARGLAYLHTFPGRSVIHRDVKSSNILLDHSMCAKVADFGFSKYAPQEGDSYVSLEVRGTAGYLDPEYYKTQQLSEKSDVFSFGVVLLEIVSGREPLNIKRPRVEWSLVEWAKPYIRASKVDEIVDPGIKGGYHAEALWRVVEVALQCLEPYSTYRPCMVDIVRELEDALIIENNASEYMKSIDSLGGSNRYSIVMDKRALPSTTSTAESTITTQNVSHPQPR.

A signal peptide spans 1-29; the sequence is MMELRVICIIRLVVACVLCLCIFIRSASS. Residues 361–382 adopt a coiled-coil conformation; sequence EVIQKMRKELLLQNQDNEALES. 4 LRR repeats span residues 406–428, 430–452, 453–475, and 477–498; these read VITK…VTEM, KLQI…PPSS, LLIS…IISL, and HLNS…AKLN. A helical membrane pass occupies residues 520–540; sequence FMIGAITSGSILITLAVVILF. Positions 595–872 constitute a Protein kinase domain; sequence EKYKTLIGEG…IVRELEDALI (278 aa). Residues 601–609 and Lys-623 each bind ATP; that span reads IGEGGFGSV. Asp-721 (proton acceptor) is an active-site residue.

Belongs to the protein kinase superfamily. Ser/Thr protein kinase family. May be phosphorylated.

The protein localises to the membrane. It carries out the reaction L-seryl-[protein] + ATP = O-phospho-L-seryl-[protein] + ADP + H(+). It catalyses the reaction L-threonyl-[protein] + ATP = O-phospho-L-threonyl-[protein] + ADP + H(+). Involved in the perception of symbiotic fungi and bacteria and required for the calcium spiking. Part of the perception/transduction system leading to nodulation or mycorrhizal infection. The protein is Nodulation receptor kinase (NORK) of Pisum sativum (Garden pea).